The following is a 327-amino-acid chain: Beta-ketoacyl-[acyl-carrier-protein] synthase III 2 (327 aa).

Active-site residues include Cys-114 and His-251. The segment at 252–256 is ACP-binding; that stretch reads SANLR. Residue Asn-281 is part of the active site.

The protein belongs to the thiolase-like superfamily. FabH family. As to quaternary structure, homodimer.

The protein resides in the cytoplasm. It carries out the reaction malonyl-[ACP] + acetyl-CoA + H(+) = 3-oxobutanoyl-[ACP] + CO2 + CoA. It participates in lipid metabolism; fatty acid biosynthesis. Its function is as follows. Catalyzes the condensation reaction of fatty acid synthesis by the addition to an acyl acceptor of two carbons from malonyl-ACP. Catalyzes the first condensation reaction which initiates fatty acid synthesis and may therefore play a role in governing the total rate of fatty acid production. Possesses both acetoacetyl-ACP synthase and acetyl transacylase activities. Its substrate specificity determines the biosynthesis of branched-chain and/or straight-chain of fatty acids. This is Beta-ketoacyl-[acyl-carrier-protein] synthase III 2 from Bacillus anthracis.